The chain runs to 124 residues: Ribosome-binding factor A (124 aa).

The protein belongs to the RbfA family. Monomer. Binds 30S ribosomal subunits, but not 50S ribosomal subunits or 70S ribosomes.

The protein localises to the cytoplasm. In terms of biological role, one of several proteins that assist in the late maturation steps of the functional core of the 30S ribosomal subunit. Associates with free 30S ribosomal subunits (but not with 30S subunits that are part of 70S ribosomes or polysomes). Required for efficient processing of 16S rRNA. May interact with the 5'-terminal helix region of 16S rRNA. This chain is Ribosome-binding factor A, found in Sorangium cellulosum (strain So ce56) (Polyangium cellulosum (strain So ce56)).